A 253-amino-acid polypeptide reads, in one-letter code: LexA repressor (253 aa).

Residues 26–46 (FDEMKDALNLRSKSGIHRLIS) constitute a DNA-binding region (H-T-H motif). Positions 73–97 (MPAATGKPPLAESGPPPVTAPATDE) are disordered. Active-site for autocatalytic cleavage activity residues include Ser174 and Lys212.

It belongs to the peptidase S24 family. Homodimer.

It catalyses the reaction Hydrolysis of Ala-|-Gly bond in repressor LexA.. Represses a number of genes involved in the response to DNA damage (SOS response), including recA and lexA. In the presence of single-stranded DNA, RecA interacts with LexA causing an autocatalytic cleavage which disrupts the DNA-binding part of LexA, leading to derepression of the SOS regulon and eventually DNA repair. In Gluconacetobacter diazotrophicus (strain ATCC 49037 / DSM 5601 / CCUG 37298 / CIP 103539 / LMG 7603 / PAl5), this protein is LexA repressor.